The primary structure comprises 225 residues: Cytochrome c oxidase subunit 2 (225 aa).

At 1-25 (MSTWFMFMFQESNSYYADNLISFHN) the chain is on the mitochondrial intermembrane side. A helical transmembrane segment spans residues 26-47 (MVMMIIIMISTLTVYIILDLFM). Residues 48-62 (NKFSNLFLLKNHNIE) lie on the Mitochondrial matrix side of the membrane. A helical membrane pass occupies residues 63-82 (IIWTIIPIIILLIICFPSLK). The Mitochondrial intermembrane segment spans residues 83-225 (ILYLIDEIVN…YFLNWVNKQI (143 aa)). Residues H159, C194, E196, C198, H202, and M205 each contribute to the Cu cation site. E196 serves as a coordination point for Mg(2+).

This sequence belongs to the cytochrome c oxidase subunit 2 family. Component of the cytochrome c oxidase (complex IV, CIV), a multisubunit enzyme composed of a catalytic core of 3 subunits and several supernumerary subunits. The complex exists as a monomer or a dimer and forms supercomplexes (SCs) in the inner mitochondrial membrane with ubiquinol-cytochrome c oxidoreductase (cytochrome b-c1 complex, complex III, CIII). The cofactor is Cu cation.

The protein localises to the mitochondrion inner membrane. It catalyses the reaction 4 Fe(II)-[cytochrome c] + O2 + 8 H(+)(in) = 4 Fe(III)-[cytochrome c] + 2 H2O + 4 H(+)(out). Its function is as follows. Component of the cytochrome c oxidase, the last enzyme in the mitochondrial electron transport chain which drives oxidative phosphorylation. The respiratory chain contains 3 multisubunit complexes succinate dehydrogenase (complex II, CII), ubiquinol-cytochrome c oxidoreductase (cytochrome b-c1 complex, complex III, CIII) and cytochrome c oxidase (complex IV, CIV), that cooperate to transfer electrons derived from NADH and succinate to molecular oxygen, creating an electrochemical gradient over the inner membrane that drives transmembrane transport and the ATP synthase. Cytochrome c oxidase is the component of the respiratory chain that catalyzes the reduction of oxygen to water. Electrons originating from reduced cytochrome c in the intermembrane space (IMS) are transferred via the dinuclear copper A center (CU(A)) of subunit 2 and heme A of subunit 1 to the active site in subunit 1, a binuclear center (BNC) formed by heme A3 and copper B (CU(B)). The BNC reduces molecular oxygen to 2 water molecules using 4 electrons from cytochrome c in the IMS and 4 protons from the mitochondrial matrix. This Apis mellifera ligustica (Common honeybee) protein is Cytochrome c oxidase subunit 2 (COII).